Reading from the N-terminus, the 329-residue chain is Thioredoxin domain-containing protein 6 (329 aa).

Residues 11 to 115 (QVNINTQELW…QKTILQQLEA (105 aa)) enclose the Thioredoxin domain. The tract at residues 157–303 (GKTCTLGIIK…LFPSFKFSDK (147 aa)) is NDK. Positions 303-329 (KDKEAPPGAEAQTMVGPVEDPCMSERI) are disordered.

Belongs to the NDK family. In terms of assembly, monomer and homodimer. Expressed in lung airway epithelium (at protein level).

The protein resides in the cytoplasm. Its subcellular location is the cytoskeleton. The protein localises to the cilium axoneme. It localises to the dynein axonemal particle. Its function is as follows. May be a regulator of microtubule physiology. This chain is Thioredoxin domain-containing protein 6, found in Mus musculus (Mouse).